Here is a 717-residue protein sequence, read N- to C-terminus: Cell division cycle protein 27 homolog A (717 aa).

Residues 198-208 show a composition bias toward polar residues; that stretch reads TEHIPGENQQD. Disordered regions lie at residues 198–217, 282–315, and 342–374; these read TEHIPGENQQDLKIMQQPGD, LSAEAQEESGRRRSARIAARKKNPMSQSFGKDSH, and SKEATTSGQSVSDIGSSVDDEEKSNPSESSPDR. A compositionally biased stretch (basic residues) spans 293–304; sequence RRSARIAARKKN. Residues 342–356 show a composition bias toward polar residues; it reads SKEATTSGQSVSDIG. TPR repeat units lie at residues 421-454, 489-522, 524-556, 557-590, 592-624, 625-658, and 659-692; these read HWVLMQVGKAYFELQDYFNADSSFTLAHQKYPYA, PESWCAVGNCYSLRKDHDTALKMFQRAIQLNERF, YAHTLCGHEFAALEEFEDAERCYRKALGIDTRH, YNAWYGLGMTYLRQEKFEFAQHQFQLALQINPRS, VIMCYYGIALHESKRNDEALMMMEKAVLTDAKN, PLPKYYKAHILTSLGDYHKAQKVLEELKECAPQE, and SSVHASLGKIYNQLKQYDKAVLHFGIALDLSPSP.

This sequence belongs to the APC3/CDC27 family. As to quaternary structure, the APC/C is composed of at least 10 subunits. Interacts with APC2 and APC10.

The protein localises to the nucleus. It functions in the pathway protein modification; protein ubiquitination. Functionally, component of the anaphase promoting complex/cyclosome (APC/C), a cell cycle-regulated E3 ubiquitin-protein ligase complex that controls progression through mitosis and the G1 phase of the cell cycle. The APC/C complex controls several key steps in the cell cycle by mediating ubiquitination and subsequent degradation of target proteins such as cyclins. The APC/C complex is required for the female gametophyte development and is involved in several aspect of development by controlling cell division and cell elongation. Involved in the control of endoreduplication. Functionally redundant with CDC27B in the control of gametophyte development. This chain is Cell division cycle protein 27 homolog A (CDC27A), found in Arabidopsis thaliana (Mouse-ear cress).